The sequence spans 34 residues: Kappa-theraphotoxin-Sc1a (34 aa).

Disulfide bonds link C2-C16, C9-C21, and C15-C28. I34 carries the isoleucine amide modification.

This sequence belongs to the neurotoxin 10 (Hwtx-1) family. 57 (ScTx1) subfamily. In terms of tissue distribution, expressed by the venom gland.

The protein localises to the secreted. Its function is as follows. Acts as a gating-modifier to inhibit voltage-gated potassium channels. It inhibits delayed Kv2.1/KCNB1 (IC(50) is 12.7 nM), Kv2.1/Kv9.3 (IC(50) is 7.2 nM) (KCNB1/KCNS3), Kv2.2/KCNB2 (IC(50) is 21.4 nM), and transient Kv4.2/KCND2 (IC(50) is 1.2 nM) channels. This chain is Kappa-theraphotoxin-Sc1a, found in Stromatopelma calceatum (Featherleg baboon tarantula).